A 379-amino-acid polypeptide reads, in one-letter code: Putative clathrin assembly protein At1g68110 (379 aa).

The ENTH domain occupies 26 to 158 (NSSYRNADLE…SFLSDQIHRL (133 aa)).

The protein localises to the membrane. It localises to the clathrin-coated pit. The protein resides in the golgi apparatus. Its subcellular location is the cytoplasmic vesicle. It is found in the clathrin-coated vesicle. This chain is Putative clathrin assembly protein At1g68110, found in Arabidopsis thaliana (Mouse-ear cress).